The chain runs to 220 residues: Miraculin (220 aa).

A signal peptide spans Met-1 to Ala-29. N-linked (GlcNAc...) asparagine glycosylation occurs at Asn-71. Disulfide bonds link Cys-76-Cys-121, Cys-177-Cys-188, and Cys-181-Cys-184. A glycan (N-linked (GlcNAc...) asparagine) is linked at Asn-215.

The protein belongs to the protease inhibitor I3 (leguminous Kunitz-type inhibitor) family. As to quaternary structure, homotetramer; dimer of homodimer. In terms of processing, glycosylated; contains as much as 13,9% of sugars (glucosamine, mannose, galactose, xylose, and fucose). In terms of tissue distribution, expressed in fruit pulp after pollination. Not expressed in seeds, stems or leaves.

In terms of biological role, miraculin has the property of modifying a sour taste into a sweet taste. This alteration of taste perception persists for many minutes. The chain is Miraculin from Synsepalum dulcificum (Miracle fruit).